The chain runs to 129 residues: KIFSKCELARKLKSMGMDGFHGYSLANWVCMAEYESNFNTQAFNGRNSNGSSDYGIFQLNSKWWCKSNSHSSANACNIMCSKFLDDNIDDDIACAKRVVKDPNGMSAWVAWVKHCKGKDLSKYLASCNL.

The region spanning Lys-1–Leu-129 is the C-type lysozyme domain. 4 disulfide bridges follow: Cys-6–Cys-127, Cys-30–Cys-115, Cys-65–Cys-80, and Cys-76–Cys-94. Catalysis depends on residues Glu-35 and Asp-53. The Ca(2+) site is built by Lys-82, Asp-85, Asn-87, Asp-90, and Asp-91.

Belongs to the glycosyl hydrolase 22 family. In terms of assembly, monomer. Requires Ca(2+) as cofactor.

The catalysed reaction is Hydrolysis of (1-&gt;4)-beta-linkages between N-acetylmuramic acid and N-acetyl-D-glucosamine residues in a peptidoglycan and between N-acetyl-D-glucosamine residues in chitodextrins.. Functionally, lysozymes have primarily a bacteriolytic function; those in tissues and body fluids are associated with the monocyte-macrophage system and enhance the activity of immunoagents. This chain is Lysozyme C, milk isozyme, found in Canis lupus familiaris (Dog).